The chain runs to 540 residues: Glucose-6-phosphate isomerase (540 aa).

The active-site Proton donor is the Glu350. Active-site residues include His381 and Lys503.

Belongs to the GPI family.

Its subcellular location is the cytoplasm. The enzyme catalyses alpha-D-glucose 6-phosphate = beta-D-fructose 6-phosphate. It participates in carbohydrate biosynthesis; gluconeogenesis. It functions in the pathway carbohydrate degradation; glycolysis; D-glyceraldehyde 3-phosphate and glycerone phosphate from D-glucose: step 2/4. Catalyzes the reversible isomerization of glucose-6-phosphate to fructose-6-phosphate. The protein is Glucose-6-phosphate isomerase of Burkholderia multivorans (strain ATCC 17616 / 249).